A 201-amino-acid chain; its full sequence is Inosine triphosphate pyrophosphatase (201 aa).

ITP is bound at residue 16–21; that stretch reads TGNAKK. Glu44 lines the Mg(2+) pocket. ITP contacts are provided by residues Lys56, 72-73, Lys89, 148-151, Lys171, and 176-177; these read DT, FGWD, and HR.

It belongs to the HAM1 NTPase family. As to quaternary structure, homodimer. Mg(2+) serves as cofactor. The cofactor is Mn(2+).

It localises to the cytoplasm. The catalysed reaction is ITP + H2O = IMP + diphosphate + H(+). It carries out the reaction dITP + H2O = dIMP + diphosphate + H(+). It catalyses the reaction XTP + H2O = XMP + diphosphate + H(+). Functionally, pyrophosphatase that hydrolyzes non-canonical purine nucleotides such as inosine triphosphate (ITP), deoxyinosine triphosphate (dITP) or xanthosine 5'-triphosphate (XTP) to their respective monophosphate derivatives. The enzyme does not distinguish between the deoxy- and ribose forms. Probably excludes non-canonical purines from RNA and DNA precursor pools, thus preventing their incorporation into RNA and DNA and avoiding chromosomal lesions. This is Inosine triphosphate pyrophosphatase from Sorghum bicolor (Sorghum).